Reading from the N-terminus, the 305-residue chain is Oxygen-dependent coproporphyrinogen-III oxidase (305 aa).

Position 93 (Ser93) interacts with substrate. A divalent metal cation is bound by residues His97 and His107. The active-site Proton donor is His107. Residue 109–111 (NVR) participates in substrate binding. A divalent metal cation contacts are provided by His146 and His176. The tract at residues 241–276 (YVEFNLVFDRGTLFGLQSGGRTESILMSLPPQVRWG) is important for dimerization. 259–261 (GGR) lines the substrate pocket.

The protein belongs to the aerobic coproporphyrinogen-III oxidase family. Homodimer. It depends on a divalent metal cation as a cofactor.

The protein resides in the cytoplasm. It catalyses the reaction coproporphyrinogen III + O2 + 2 H(+) = protoporphyrinogen IX + 2 CO2 + 2 H2O. The protein operates within porphyrin-containing compound metabolism; protoporphyrin-IX biosynthesis; protoporphyrinogen-IX from coproporphyrinogen-III (O2 route): step 1/1. Involved in the heme biosynthesis. Catalyzes the aerobic oxidative decarboxylation of propionate groups of rings A and B of coproporphyrinogen-III to yield the vinyl groups in protoporphyrinogen-IX. The sequence is that of Oxygen-dependent coproporphyrinogen-III oxidase from Pseudomonas aeruginosa (strain LESB58).